The following is a 1162-amino-acid chain: Paired amphipathic helix protein Sin3-like 5 (1162 aa).

The tract at residues 1 to 37 (MKRVREEVYVEPQMRGPTVSSRGETNGRPSTISGGGT) is disordered. Polar residues predominate over residues 18–30 (TVSSRGETNGRPS). PAH domains lie at 28-109 (RPST…LPKG) and 123-193 (KPVD…LPDF). Disordered stretches follow at residues 702–727 (RVSD…ESCE), 743–779 (QKLP…DDDN), 803–830 (GGQV…SNEG), and 1121–1143 (KKAT…ELSR). The residue at position 817 (S817) is a Phosphoserine. Residues 1123 to 1139 (ATLNPTGPENVKTSDSS) show a composition bias toward polar residues.

The protein resides in the nucleus. Functionally, acts as a transcriptional repressor. Plays roles in regulating gene expression and genome stability. The chain is Paired amphipathic helix protein Sin3-like 5 (SNL5) from Arabidopsis thaliana (Mouse-ear cress).